The primary structure comprises 207 residues: MTLPDFRLIRLLPLASLVLTACTLPGHKGPGKSPDSPQWRQHQQEVRHLNQYQTRGAFAYISDDQKVYARFFWQQTGQDRYRLLLTNPLGSTELELNAQPGNVQLVDNKGQRYTADDAEEMIGKLTGMPIPLNSLRQWILGLPGDATDYKLDDQYRLSEVNYRQDGKNWKVVYGGYDSKTQPAMPANMELSDGSQRIKLKMDNWIVK.

An N-terminal signal peptide occupies residues Met1–Ala21. A lipid anchor (N-palmitoyl cysteine) is attached at Cys22. Cys22 is lipidated: S-diacylglycerol cysteine.

This sequence belongs to the LolB family. As to quaternary structure, monomer.

The protein resides in the cell outer membrane. Functionally, plays a critical role in the incorporation of lipoproteins in the outer membrane after they are released by the LolA protein. The chain is Outer-membrane lipoprotein LolB from Salmonella agona (strain SL483).